Reading from the N-terminus, the 415-residue chain is METKRVLSSSGSIDSISPLPDELLSHILSFLPTKRAASTSILSKRWRTLFPLMNHLCASLYLDDTDLLYPERQTEEEYYVIHNSFRNFVDKTLSGCNNNSLKKFSLTYEDDDVQRMCLTTGMMSKALEQGVSDLELYIYMPLMYEPPRLLPDTVFINNTLVKLTLGTELCLGRSPWENLEELYIHHIYIEDRDEEFNIHTAPHYIAHNIKKLTVCYNNDVQAPRILSIYTPNLVYLDYSDYLTCLYNSENHFNDLLEARLDLAFARAGRWGDEHDTCLKIMNSITNVQILHLSCFTVENLATLHFEGSEKEYWQLLCNMIEKSPKLETLVLEGLYGISDCEVGIDGGNMVKVVEIQEYKGRLEELNQVKCFLREMENLEEVKVNTSDEIENKLQLTNDLLALLPKRSSKCNIHVL.

One can recognise an F-box domain in the interval 13 to 59; the sequence is IDSISPLPDELLSHILSFLPTKRAASTSILSKRWRTLFPLMNHLCAS.

This is Putative F-box protein At5g40050 from Arabidopsis thaliana (Mouse-ear cress).